Consider the following 258-residue polypeptide: UPF0246 protein CJA_0191 (258 aa).

Belongs to the UPF0246 family.

The polypeptide is UPF0246 protein CJA_0191 (Cellvibrio japonicus (strain Ueda107) (Pseudomonas fluorescens subsp. cellulosa)).